Reading from the N-terminus, the 772-residue chain is Protein transport protein SEC23 F (772 aa).

Residues Cys-65, Cys-68, Cys-87, and Cys-90 each coordinate Zn(2+). The segment at 65 to 90 (CKTCKALLNAFARVDFAAMNWVCPFC) is zinc finger-like.

The protein belongs to the SEC23/SEC24 family. SEC23 subfamily. In terms of assembly, component of the coat protein complex II (COPII), composed of at least five proteins: the Sec23/24 complex, the Sec13/31 complex and Sar1. Interacts with SEC24A.

Its subcellular location is the cytoplasmic vesicle. It localises to the COPII-coated vesicle membrane. It is found in the endoplasmic reticulum membrane. The protein localises to the membrane. Component of the coat protein complex II (COPII) which promotes the formation of transport vesicles from the endoplasmic reticulum (ER). The coat has two main functions, the physical deformation of the endoplasmic reticulum membrane into vesicles and the selection of cargo molecules. In Arabidopsis thaliana (Mouse-ear cress), this protein is Protein transport protein SEC23 F.